Reading from the N-terminus, the 1138-residue chain is Solute carrier family 12 member 5 (1138 aa).

Disordered regions lie at residues 1 to 62 and 96 to 116; these read MSRR…KGRE and QGSR…KPVQ. Over 1–98 the chain is Cytoplasmic; that stretch reads MSRRFTVTSL…ANYTNLPQGS (98 aa). Residues 21–45 show a composition bias toward basic and acidic residues; that stretch reads PESRRHSVADPRRLPREDVKGDGNP. Over residues 46–55 the composition is skewed to polar residues; sequence KESSPFINST. Phosphothreonine is present on Thr57. Basic and acidic residues predominate over residues 98 to 111; sequence SREHEEAENNEGGK. A discontinuously helical transmembrane segment spans residues 99–120; the sequence is REHEEAENNEGGKKKPVQAPRM. Lys113 contacts K(+). Over 121–129 the chain is Extracellular; it reads GTFMGVYLP. A helical membrane pass occupies residues 130–151; it reads CLQNIFGVILFLRLTWVVGIAG. Residues 152-174 lie on the Cytoplasmic side of the membrane; that stretch reads IMESFCMVFICCSCTMLTAISMS. Residues 175-203 traverse the membrane as a helical segment; the sequence is AIATNGVVPAGGSYYMISRSLGPEFGGAV. Ala184 provides a ligand contact to chloride. At 204-229 the chain is on the extracellular side; the sequence is GLCFYLGTTFAGAMYILGTIEILLAY. 2 consecutive transmembrane segments (helical) span residues 230–250 and 251–276; these read LFPA…AAML and NNMR…KYVN. Residues 277–402 are Extracellular-facing; that stretch reads KFALVFLGCV…ERRGMPSVGL (126 aa). A disulfide bridge links Cys310 with Cys325. N-linked (GlcNAc...) asparagine glycosylation is found at Asn314, Asn333, Asn351, and Asn362. Residues Cys345 and Cys354 are joined by a disulfide bond. Residues 403-420 form a helical membrane-spanning segment; it reads ADGTPVDMDHPYVFSDMT. K(+) is bound at residue Met410. Chloride contacts are provided by Tyr414 and Val415. The Cytoplasmic portion of the chain corresponds to 421 to 429; it reads SYFTLLVGI. The helical transmembrane segment at 430 to 453 threads the bilayer; it reads YFPSVTGIMAGSNRSGDLRDAQKS. Asp446 lines the K(+) pocket. Residues 454–485 lie on the Extracellular side of the membrane; sequence IPTGTILAIATTSAVYISSVVLFGACIEGVVL. The chain crosses the membrane as a helical span at residues 486-513; it reads RDKFGEAVNGNLVVGTLAWPSPWVIVIG. Residues 514-534 are Cytoplasmic-facing; that stretch reads SFFSTCGAGLQSLTGAPRLLQ. The next 2 helical transmembrane spans lie at 535–555 and 556–578; these read AISR…KANG and EPTW…ASLD. Glu569 is a chloride binding site. Residues 579 to 592 lie on the Cytoplasmic side of the membrane; the sequence is EVAPILSMFFLMCY. Helical transmembrane passes span 593 to 615 and 616 to 632; these read MFVN…PRFR and YYHW…CLAL. The Cytoplasmic portion of the chain corresponds to 633-1138; the sequence is MFICSWYYAL…GGREVITIYS (506 aa). Residues 667–681 form a scissor helix region; that stretch reads GIRGLSLSAARYALL. Position 929 is a phosphothreonine; by OXSR1 and STK39 (Thr929). The segment at 943-1051 is disordered; it reads HLTKNERERE…GPSPVSSEGI (109 aa). Residues 945–962 show a composition bias toward basic and acidic residues; that stretch reads TKNEREREIQSITDESRG. Over residues 982-994 the composition is skewed to acidic residues; that stretch reads TACDNEEKPEEEV. Positions 1001 to 1012 are enriched in low complexity; sequence SAPSCPSSSPSP. Positions 1019-1041 are enriched in basic and acidic residues; it reads ERETDPEVHLTWTKDKSVAEKNK. At Thr1029 the chain carries Phosphothreonine; by OXSR1 and STK39. Residues Ser1044, Ser1047, and Ser1048 each carry the phosphoserine modification.

This sequence belongs to the SLC12A transporter family. K/Cl co-transporter subfamily. Homodimer; adopts a domain-swap conformation at the scissor helices connecting the transmembrane domain and C-terminal domain. Heterodimer with K-Cl cotransporters SLC12A6 and SLC12A7. Interacts with AP2A1. Post-translationally, phosphorylated at Thr-929 and Thr-1029 by OXSR1/OSR1 and STK39/SPAK downstream of WNK kinases (WNK1, WNK2, WNK3 or WNK4), inhibiting the potassium-chloride cotransport activity. Expressed in brainstem, spinal cord and olfactory bulb of 17 dpc embryos. Expressed in all parts of the brain and spinal cord in postnatal day 14 mice. In terms of tissue distribution, expressed in brainstem and spinal cord of 17 dpc embryos. Expressed in all parts of the brain and spinal cord in postnatal day 14 mice.

The protein resides in the cell membrane. The protein localises to the cell projection. It is found in the dendrite. It carries out the reaction K(+)(in) + chloride(in) = K(+)(out) + chloride(out). Its activity is regulated as follows. Inhibited following phosphorylation by OXSR1/OSR1 and STK39/SPAK: phosphorylation takes place downstream of WNK kinases (WNK1, WNK2, WNK3 or WNK4) in response to hyperosmotic stress and subsequent cell shrinkage. Functionally, mediates electroneutral potassium-chloride cotransport in mature neurons and is required for neuronal Cl(-) homeostasis. As major extruder of intracellular chloride, it establishes the low neuronal Cl(-) levels required for chloride influx after binding of GABA-A and glycine to their receptors, with subsequent hyperpolarization and neuronal inhibition. Involved in the regulation of dendritic spine formation and maturation. The protein is Solute carrier family 12 member 5 (Slc12a5) of Mus musculus (Mouse).